Here is a 112-residue protein sequence, read N- to C-terminus: uncharacterized protein (112 aa).

Over residues 1 to 11 (MAESVASSESL) the composition is skewed to polar residues. Residues 1–32 (MAESVASSESLPQMKPEEPESKKSPSREAIPK) are disordered. Basic and acidic residues predominate over residues 15–31 (KPEEPESKKSPSREAIP). A helical membrane pass occupies residues 81 to 101 (VVFIFMIAIMSMLVIGLVVCG).

It localises to the membrane. This is an uncharacterized protein from Encephalitozoon cuniculi (strain GB-M1) (Microsporidian parasite).